Reading from the N-terminus, the 57-residue chain is UPF0391 membrane protein bsl5717 (57 aa).

Transmembrane regions (helical) follow at residues 6-26 (WALI…TGIS) and 35-55 (FLFY…LTIF).

This sequence belongs to the UPF0391 family.

The protein localises to the cell membrane. This chain is UPF0391 membrane protein bsl5717, found in Bradyrhizobium diazoefficiens (strain JCM 10833 / BCRC 13528 / IAM 13628 / NBRC 14792 / USDA 110).